Here is a 352-residue protein sequence, read N- to C-terminus: Maleylacetate reductase (352 aa).

The protein belongs to the iron-containing alcohol dehydrogenase family.

The enzyme catalyses 3-oxoadipate + NAD(+) = maleylacetate + NADH + H(+). It catalyses the reaction 3-oxoadipate + NADP(+) = maleylacetate + NADPH + H(+). The protein operates within aromatic compound metabolism; 3-chlorocatechol degradation. The sequence is that of Maleylacetate reductase (tcbF) from Pseudomonas sp. (strain P51).